The chain runs to 711 residues: Zinc finger CCCH domain-containing protein 43 (711 aa).

The disordered stretch occupies residues 1–49 (MPQDDDWFWGRPTPVVVGDGETTSKPKPPVAGKTKKVEEQHPRRPGEPD). Residues 35-47 (KKVEEQHPRRPGE) show a composition bias toward basic and acidic residues. C3H1-type zinc fingers lie at residues 44-72 (RPGE…HPDP), 90-118 (RPGE…HPPR), and 157-185 (RPGT…HPDP). The MIF4G domain maps to 384–637 (LKTLKSILNT…GAISYLIEKE (254 aa)).

This is Zinc finger CCCH domain-containing protein 43 from Oryza sativa subsp. japonica (Rice).